The sequence spans 260 residues: Carbonic anhydrase 2 (260 aa).

One can recognise an Alpha-carbonic anhydrase domain in the interval 3–259 (HHWGYDSHNG…LKSREVRASF (257 aa)). Residue His64 is the Proton donor/acceptor of the active site. 3 residues coordinate Zn(2+): His94, His96, and His119. 198 to 199 (TT) serves as a coordination point for substrate.

This sequence belongs to the alpha-carbonic anhydrase family. Zn(2+) is required as a cofactor.

It localises to the cytoplasm. Its subcellular location is the cell membrane. The catalysed reaction is hydrogencarbonate + H(+) = CO2 + H2O. The enzyme catalyses urea = cyanamide + H2O. Its activity is regulated as follows. Inhibited by acetazolamide. Its function is as follows. Catalyzes the reversible hydration of carbon dioxide. Can also hydrate cyanamide to urea. The protein is Carbonic anhydrase 2 (CA2) of Gallus gallus (Chicken).